We begin with the raw amino-acid sequence, 347 residues long: NADH-ubiquinone oxidoreductase chain 2 (347 aa).

11 consecutive transmembrane segments (helical) span residues 1 to 21, 25 to 45, 59 to 79, 96 to 116, 123 to 143, 153 to 173, 178 to 198, 200 to 220, 239 to 259, 278 to 298, and 325 to 345; these read MNPL…IITM, HWLT…PLIM, YFLI…INFM, TIIL…FWVP, LLST…SILY, IILA…LNQT, IMAY…IYNP, LMLL…TILI, ILMM…PLSG, ISLT…RLIY, and FLPT…MMFI.

The protein belongs to the complex I subunit 2 family. As to quaternary structure, core subunit of respiratory chain NADH dehydrogenase (Complex I) which is composed of 45 different subunits. Interacts with TMEM242.

The protein resides in the mitochondrion inner membrane. The enzyme catalyses a ubiquinone + NADH + 5 H(+)(in) = a ubiquinol + NAD(+) + 4 H(+)(out). Its function is as follows. Core subunit of the mitochondrial membrane respiratory chain NADH dehydrogenase (Complex I) that is believed to belong to the minimal assembly required for catalysis. Complex I functions in the transfer of electrons from NADH to the respiratory chain. The immediate electron acceptor for the enzyme is believed to be ubiquinone. This chain is NADH-ubiquinone oxidoreductase chain 2, found in Oryzorictes hova (Hova rice tenrec).